A 397-amino-acid polypeptide reads, in one-letter code: Acetate kinase (397 aa).

Asparagine 7 is a binding site for Mg(2+). Lysine 14 provides a ligand contact to ATP. Arginine 90 contributes to the substrate binding site. Aspartate 147 serves as the catalytic Proton donor/acceptor. ATP contacts are provided by residues 207–211 (HLGNG), 282–284 (DFR), and 330–334 (GLGEN). Glutamate 383 provides a ligand contact to Mg(2+).

It belongs to the acetokinase family. As to quaternary structure, homodimer. The cofactor is Mg(2+). Mn(2+) serves as cofactor.

The protein localises to the cytoplasm. It catalyses the reaction acetate + ATP = acetyl phosphate + ADP. The protein operates within metabolic intermediate biosynthesis; acetyl-CoA biosynthesis; acetyl-CoA from acetate: step 1/2. In terms of biological role, catalyzes the formation of acetyl phosphate from acetate and ATP. Can also catalyze the reverse reaction. This Clostridium botulinum (strain Loch Maree / Type A3) protein is Acetate kinase.